The sequence spans 3674 residues: Spectrin beta chain, non-erythrocytic 5 (3674 aa).

The disordered stretch occupies residues 1-37; sequence MAGQPHSPRELLGAAGHRSRRPSTELRVPPSPSLTMD. The interval 1 to 279 is actin-binding; sequence MAGQPHSPRE…IMTYVSLYYH (279 aa). 2 consecutive Calponin-homology (CH) domains span residues 54–159 and 177–282; these read QMQE…LRFQ and LSTK…HYCS. 8 Spectrin repeats span residues 307 to 416, 428 to 529, 642 to 742, 747 to 810, 900 to 996, 1103 to 1206, 1209 to 1311, and 1315 to 1417; these read LQTQ…ALQQ, ARRF…RKQV, AEFL…ARLQ, VLQY…QGRA, GFCS…AVQL, ARQS…WLQE, ELQK…RQLL, and QLQE…ELQQ. Positions 1441 to 1469 are disordered; the sequence is ALQSSETGQDLRSSQRLQKRHQQLESESR. Residues 1442 to 1456 are compositionally biased toward polar residues; sequence LQSSETGQDLRSSQR. Spectrin repeat units lie at residues 1521 to 1624, 1628 to 1727, 1731 to 1835, 1842 to 1940, 1944 to 2046, 2052 to 2146, 2150 to 2253, 2256 to 2361, 2366 to 2467, 2471 to 2574, 2577 to 2680, 2683 to 2784, 2791 to 2890, 2894 to 2997, 3000 to 3103, 3106 to 3209, 3213 to 3311, 3318 to 3415, and 3422 to 3488; these read ELHQ…CLQQ, FQQY…RELE, RLHE…ALRD, VHRD…AQLE, LLAR…ERLQ, QLFL…HALH, LMAS…ELED, NFLE…QQLE, IHVL…EALD, QAQK…QLQQ, ELQL…RLEE, QLQA…AKLQ, RLRR…TALE, LLLK…LLQQ, EAQQ…GLQE, QLHQ…ENLA, EVHS…QWLA, AFLG…RWQR, and LQKL…EQEL. The PH domain maps to 3533-3641; it reads TPTMEGSLEF…WWRALGSTAA (109 aa).

It belongs to the spectrin family. Probably associates with an alpha chain. Interacts (via C-terminus) with TRPC4. As to expression, expressed at very low levels in many tissues, with strongest expression in cerebellum, spinal cord, stomach, pituitary gland, liver, pancreas, salivary gland, kidney, bladder, and heart.

The protein localises to the cytoplasm. The protein resides in the cytoskeleton. This chain is Spectrin beta chain, non-erythrocytic 5 (SPTBN5), found in Homo sapiens (Human).